Reading from the N-terminus, the 748-residue chain is MGQTGKKSEKGAVCWRKRVKSEYMRLRQLKRFRRADEVKSMFNTNRQKIMERTEILNQEWKQRRIQPVHIMTTVSSLRGTRECFVTSDLDFPKQVIPLKTLTAVASMPIMYSWSPLQQNFMVEDETVLHNIPYMGDEVLDQDGTFIEELIKNYDGKVHGDRECGFINDEIFVELVNALAQYSDYEDDEDGEDNQDDERDDITKDQDDNMEEKETLPLRKFPSDKIFEAISSVFPDKGTSEELKEKYKELTEQQLPGALPPECTPNIDGSNAKSVQREQSLHSFHTLFCRRCFKYDCFLHPFHATPNTYKRKNNEAANDGKLCGPYCYQLLEGAREFAAALTAEIIKTPPKRPSGRRRGRLPNNSSRPSTPTVNVLEAKDTDSDREAGTETGGESNDKEEEEKKDETDSSSEANSRCQTPIKMKPNIEPPENVEWSGAEASLFRVLIGTYYDNFCAIARLISTKTCRQVYEFRVKESSIIAPVIAEDVDTPPRKKKRKHRLWAAHCRKIQLKKDGSSNHVYNYQPCDHPRQPCDSSCPCVIAQNFCEKFCQCSSDCQNRFPGCRCKAQCNTKQCPCYLAVRECDPDLCLTCGAADHWDSKNVSCKNCSIQRGSKKHLLLAPSDVAGWGIYIKDPVQKNEFISEYCGEIISQDEADRRGKVYDKYMCSFLFNLNNDFVVDATRKGNKIRFANHSLNPNCYAKVMMVNGDHRIGIFAKRAIQTGEELFFDYRYSQADALKYVGIEREMEIP.

Residues Asp-183–Asp-199 show a composition bias toward acidic residues. Disordered stretches follow at residues Asp-183–Leu-215 and Thr-347–Pro-428. Positions Asp-200–Leu-215 are enriched in basic and acidic residues. Basic residues predominate over residues Pro-348–Arg-359. The segment covering Glu-376 to Gly-387 has biased composition (basic and acidic residues). The region spanning Cys-505–Ser-607 is the CXC domain. Positions Lys-614–Arg-729 constitute an SET domain.

This sequence belongs to the class V-like SAM-binding methyltransferase superfamily. Histone-lysine methyltransferase family. EZ subfamily. In terms of assembly, component of the prc2/eed-ezh2 complex.

The protein localises to the nucleus. It carries out the reaction L-lysyl(27)-[histone H3] + 3 S-adenosyl-L-methionine = N(6),N(6),N(6)-trimethyl-L-lysyl(27)-[histone H3] + 3 S-adenosyl-L-homocysteine + 3 H(+). Polycomb group (PcG) protein. Catalytic subunit of the prc2/eed-ezh2 complex, which methylates 'Lys-9' and 'Lys-27' of histone H3, leading to transcriptional repression of the affected target gene. May regulate the circadian clock via histone methylation at the promoter of the circadian genes. In Xenopus laevis (African clawed frog), this protein is Histone-lysine N-methyltransferase EZH2 (ezh2-b).